The sequence spans 266 residues: Adaptin ear-binding coat-associated protein 2 (266 aa).

Disordered regions lie at residues 164 to 191 and 244 to 266; these read SMKKKDGAAGTPRARPTSTGGLSLLPPP and GDFTKSTGSTSSQTQPGAGWVQF. Phosphoserine is present on S181. A WXXF motif 1 motif is present at residues 243–246; it reads WGDF. Low complexity predominate over residues 247–258; that stretch reads TKSTGSTSSQTQ. Positions 263–266 match the WXXF motif 2 motif; it reads WVQF.

Belongs to the NECAP family. Interacts with AP1G1 and AP2A1 components of the adapter protein complexes AP-1 and AP-2. Interacts with the GAE domain proteins GGA1, GGA2 and GGA3.

Its subcellular location is the cytoplasmic vesicle. The protein resides in the clathrin-coated vesicle membrane. It is found in the cell membrane. Its function is as follows. Involved in endocytosis. This Bos taurus (Bovine) protein is Adaptin ear-binding coat-associated protein 2 (NECAP2).